Consider the following 406-residue polypeptide: Calsequestrin-2 (406 aa).

The signal sequence occupies residues 1–19 (MKATCWILAGFCLLFCCKA). Asn-335 is a glycosylation site (N-linked (GlcNAc...) asparagine). Residues 365-406 (VLSGKINTEDDDDDDDDDDDDDDDDDDDDDDDDDDDDDDDDD) are disordered. A compositionally biased stretch (acidic residues) spans 373-406 (EDDDDDDDDDDDDDDDDDDDDDDDDDDDDDDDDD).

The protein belongs to the calsequestrin family. Skeletal and heart muscle.

The protein localises to the sarcoplasmic reticulum lumen. Its function is as follows. Calsequestrin is a high-capacity, moderate affinity, calcium-binding protein and thus acts as an internal calcium store in muscle. Calcium ions are bound by clusters of acidic residues at the protein surface, especially at the interface between subunits. Can bind around 60 Ca(2+) ions. Regulates the release of lumenal Ca(2+) via the calcium release channel RYR2; this plays an important role in triggering muscle contraction. Plays a role in excitation-contraction coupling in the heart and in regulating the rate of heart beats. The sequence is that of Calsequestrin-2 (CASQ2) from Gallus gallus (Chicken).